The following is a 159-amino-acid chain: Large ribosomal subunit protein eL24 (159 aa).

The disordered stretch occupies residues 118 to 159 (ANKAVRAAKAAANKEKKASQPKTQQKTAKNVKTAAPRVGGKR). Over residues 137-147 (QPKTQQKTAKN) the composition is skewed to polar residues.

Belongs to the eukaryotic ribosomal protein eL24 family.

The sequence is that of Large ribosomal subunit protein eL24 from Caenorhabditis elegans.